We begin with the raw amino-acid sequence, 103 residues long: Ribonuclease VapC14 (103 aa).

The region spanning 3-74 is the PINc domain; it reads YVLDTNVVSA…WFDDKVLRIF (72 aa). Asp-6 provides a ligand contact to Mg(2+).

Belongs to the PINc/VapC protein family. Requires Mg(2+) as cofactor.

Its function is as follows. Toxic component of a type II toxin-antitoxin (TA) system. An RNase. The cognate antitoxin is VapB14. The chain is Ribonuclease VapC14 (vapC14) from Mycobacterium tuberculosis (strain CDC 1551 / Oshkosh).